The following is a 697-amino-acid chain: Elongation factor G (697 aa).

The tr-type G domain maps to 8 to 290 (ERYRNIGISA…AVLDFLPSPV (283 aa)). GTP is bound by residues 17–24 (AHIDAGKT), 88–92 (DTPGH), and 142–145 (NKMD).

This sequence belongs to the TRAFAC class translation factor GTPase superfamily. Classic translation factor GTPase family. EF-G/EF-2 subfamily.

It localises to the cytoplasm. Functionally, catalyzes the GTP-dependent ribosomal translocation step during translation elongation. During this step, the ribosome changes from the pre-translocational (PRE) to the post-translocational (POST) state as the newly formed A-site-bound peptidyl-tRNA and P-site-bound deacylated tRNA move to the P and E sites, respectively. Catalyzes the coordinated movement of the two tRNA molecules, the mRNA and conformational changes in the ribosome. In Methylobacillus flagellatus (strain ATCC 51484 / DSM 6875 / VKM B-1610 / KT), this protein is Elongation factor G.